Here is a 434-residue protein sequence, read N- to C-terminus: Methyl-coenzyme M reductase subunit beta (434 aa).

Tyrosine 365 provides a ligand contact to coenzyme M. Glycine 367 serves as a coordination point for coenzyme B.

It belongs to the methyl-coenzyme M reductase beta subunit family. In terms of assembly, MCR is a hexamer of two alpha, two beta, and two gamma chains, forming a dimer of heterotrimers. Coenzyme F430 is required as a cofactor.

It is found in the cytoplasm. The enzyme catalyses coenzyme B + methyl-coenzyme M = methane + coenzyme M-coenzyme B heterodisulfide. It functions in the pathway one-carbon metabolism; methyl-coenzyme M reduction; methane from methyl-coenzyme M: step 1/1. In terms of biological role, component of the methyl-coenzyme M reductase (MCR) I that catalyzes the reductive cleavage of methyl-coenzyme M (CoM-S-CH3 or 2-(methylthio)ethanesulfonate) using coenzyme B (CoB or 7-mercaptoheptanoylthreonine phosphate) as reductant which results in the production of methane and the mixed heterodisulfide of CoB and CoM (CoM-S-S-CoB). This is the final step in methanogenesis. This Methanosarcina barkeri (strain Fusaro / DSM 804) protein is Methyl-coenzyme M reductase subunit beta (mcrB).